The following is a 467-amino-acid chain: Sugar transporter ERD6-like 11 (467 aa).

12 helical membrane passes run 26-46, 75-95, 105-125, 128-148, 155-177, 183-203, 266-286, 301-321, 328-348, 359-379, 402-422, and 428-448; these read ITAC…SYGC, FLNV…VILG, FFCV…WLDL, ISLG…IAEI, GAFT…FFGT, VMAV…FFIP, LVVG…GITY, LGSM…LILV, PLLL…GVSF, LIPI…AFGI, IVAL…NFMF, and GTFY…WMLV.

This sequence belongs to the major facilitator superfamily. Sugar transporter (TC 2.A.1.1) family.

Its subcellular location is the membrane. Its function is as follows. Sugar transporter. The polypeptide is Sugar transporter ERD6-like 11 (Arabidopsis thaliana (Mouse-ear cress)).